We begin with the raw amino-acid sequence, 963 residues long: Adhesion G protein-coupled receptor D2 (963 aa).

Residues 1-662 (MDAPWGAGER…EEESLLRTLS (662 aa)) lie on the Extracellular side of the membrane. Residues 18–38 (DRSGVSLGPPPTPQVNQGTLG) are disordered. The Pentraxin (PTX) domain maps to 116–325 (TTAVLVFDER…LPTVWVRLLC (210 aa)). A disulfide bridge links cysteine 146 with cysteine 212. Asparagine 271 carries an N-linked (GlcNAc...) asparagine glycan. Positions 489–649 (MALVASVQRL…AILLQIYEVQ (161 aa)) constitute a GAIN-B domain. The segment at 599–649 (PLFPPHPPSPYTGGAWATTGCSVAALYLDSTACFCNHSTSFAILLQIYEVQ) is GPS. Cysteine 619 and cysteine 633 are disulfide-bonded. N-linked (GlcNAc...) asparagine glycosylation is present at asparagine 634. A helical membrane pass occupies residues 663–683 (FVGCGVSFCALTTTFLLFLVA). Over 684 to 691 (GVPKSERT) the chain is Cytoplasmic. A helical membrane pass occupies residues 692 to 712 (TVHKNLTFSLASAEGFLMTSE). The Extracellular segment spans residues 713–720 (WAKANEVA). A helical membrane pass occupies residues 721–741 (CVAVTVAMHFLFLVAFSWMLV). At 742-762 (EGLLLWRKVVAVSMHPGPGMR) the chain is on the cytoplasmic side. The chain crosses the membrane as a helical span at residues 763 to 783 (LYHATGWGVPVGIVAVTLAML). The Extracellular portion of the chain corresponds to 784–800 (PHDYVAPGHCWLNVHTN). Residues 801–821 (AIWAFVGPVLFVLTANTCILA) traverse the membrane as a helical segment. The Cytoplasmic segment spans residues 822–857 (RVVMITVSSARRRARMLSPQPCLQQQIWTQIWATVK). Residues 858–878 (PVLVLLPVLGLTWLAGILVHL) traverse the membrane as a helical segment. Over 879–880 (SP) the chain is Extracellular. Residues 881 to 901 (AWAYAAVGLNSIQGLYIFLVY) form a helical membrane-spanning segment. Residues 902–963 (AACNEEVRSA…TPRHPLKAPA (62 aa)) are Cytoplasmic-facing.

Belongs to the G-protein coupled receptor 2 family. Adhesion G-protein coupled receptor (ADGR) subfamily.

Its subcellular location is the membrane. Orphan receptor. In Homo sapiens (Human), this protein is Adhesion G protein-coupled receptor D2 (ADGRD2).